A 453-amino-acid polypeptide reads, in one-letter code: tRNA-2-methylthio-N(6)-dimethylallyladenosine synthase (453 aa).

The 121-residue stretch at 11–131 (KSFHVKSFGC…LPQLVADAAE (121 aa)) folds into the MTTase N-terminal domain. Positions 20, 56, 94, 167, 171, and 174 each coordinate [4Fe-4S] cluster. One can recognise a Radical SAM core domain in the interval 153–385 (RRQGPTAFLT…QALLNEQQHR (233 aa)). In terms of domain architecture, TRAM spans 388–449 (LATVGKRCEV…PNSLSGALVE (62 aa)).

This sequence belongs to the methylthiotransferase family. MiaB subfamily. As to quaternary structure, monomer. [4Fe-4S] cluster is required as a cofactor.

The protein localises to the cytoplasm. The catalysed reaction is N(6)-dimethylallyladenosine(37) in tRNA + (sulfur carrier)-SH + AH2 + 2 S-adenosyl-L-methionine = 2-methylsulfanyl-N(6)-dimethylallyladenosine(37) in tRNA + (sulfur carrier)-H + 5'-deoxyadenosine + L-methionine + A + S-adenosyl-L-homocysteine + 2 H(+). In terms of biological role, catalyzes the methylthiolation of N6-(dimethylallyl)adenosine (i(6)A), leading to the formation of 2-methylthio-N6-(dimethylallyl)adenosine (ms(2)i(6)A) at position 37 in tRNAs that read codons beginning with uridine. This Rhizorhabdus wittichii (strain DSM 6014 / CCUG 31198 / JCM 15750 / NBRC 105917 / EY 4224 / RW1) (Sphingomonas wittichii) protein is tRNA-2-methylthio-N(6)-dimethylallyladenosine synthase.